The chain runs to 375 residues: Killer cell immunoglobulin-like receptor 2DL5A (375 aa).

An N-terminal signal peptide occupies residues 1–21 (MSLMVISMACVGFFLLQGAWT). At 22–238 (HEGGQDKPLL…PSSKTGIRRH (217 aa)) the chain is on the extracellular side. 2 Ig-like C2-type domains span residues 42 to 102 (GGHV…HPRS) and 137 to 200 (GENV…LHDS). An intrachain disulfide couples C49 to C95. Residues N139, N173, and N218 are each glycosylated (N-linked (GlcNAc...) asparagine). C144 and C193 are joined by a disulfide. The disordered stretch occupies residues 213 to 233 (VSVTGNSSSSSSSPTEPSSKT). The segment covering 219-231 (SSSSSSSPTEPSS) has biased composition (low complexity). The helical transmembrane segment at 239–259 (LHILIGTSVAIILFIILFFFL) threads the bilayer. Residues 260 to 375 (LHCCCSNKKN…ASSHVPAAGI (116 aa)) lie on the Cytoplasmic side of the membrane. The interval 334–375 (AKPRSLSPAHKHHSQALRGSSRETTALSQNRVASSHVPAAGI) is disordered. Over residues 355–366 (RETTALSQNRVA) the composition is skewed to polar residues.

It belongs to the immunoglobulin superfamily.

The protein resides in the cell membrane. Receptor on natural killer (NK) cells for HLA-C alleles. Inhibits the activity of NK cells thus preventing cell lysis. The polypeptide is Killer cell immunoglobulin-like receptor 2DL5A (KIR2DL5A) (Homo sapiens (Human)).